We begin with the raw amino-acid sequence, 217 residues long: MRGAFYVTTALLITNSIRTAAEANPPGRQPMSHHDGVVPGKSSPRRFLQGSHEPHDKFAVSAANEERMPEPSAKITASLSEEALDTVRKAAHFTFDLNAPPEETPTGMVEAYQVLRQKDPRTVTASHPKRTAEALTSLDEALGYANPKYSAGGQSKKLRTSVSFKATEVRNSISRDRMTPTPRTLSDDDVQNVHKLYMEHLERNLAVFAPTVGGRRE.

The signal sequence occupies residues 1 to 23 (MRGAFYVTTALLITNSIRTAAEA). Positions 22-52 (EANPPGRQPMSHHDGVVPGKSSPRRFLQGSH) are disordered. Positions 46–67 (RFLQGSHEPHDKFAVSAANEER) match the RxLR-dEER motif.

It belongs to the RxLR effector family.

It is found in the secreted. The protein resides in the host nucleus. The protein localises to the host cytoplasm. Functionally, secreted effector that completely suppresses the host cell death induced by cell death-inducing proteins. The protein is Secreted RxLR effector protein 147 of Plasmopara viticola (Downy mildew of grapevine).